Consider the following 346-residue polypeptide: Phenylalanine--tRNA ligase alpha subunit (346 aa).

Glutamate 258 serves as a coordination point for Mg(2+).

This sequence belongs to the class-II aminoacyl-tRNA synthetase family. Phe-tRNA synthetase alpha subunit type 1 subfamily. Tetramer of two alpha and two beta subunits. The cofactor is Mg(2+).

It localises to the cytoplasm. The catalysed reaction is tRNA(Phe) + L-phenylalanine + ATP = L-phenylalanyl-tRNA(Phe) + AMP + diphosphate + H(+). The protein is Phenylalanine--tRNA ligase alpha subunit of Protochlamydia amoebophila (strain UWE25).